The sequence spans 143 residues: SsrA-binding protein (143 aa).

This sequence belongs to the SmpB family.

The protein localises to the cytoplasm. Functionally, required for rescue of stalled ribosomes mediated by trans-translation. Binds to transfer-messenger RNA (tmRNA), required for stable association of tmRNA with ribosomes. tmRNA and SmpB together mimic tRNA shape, replacing the anticodon stem-loop with SmpB. tmRNA is encoded by the ssrA gene; the 2 termini fold to resemble tRNA(Ala) and it encodes a 'tag peptide', a short internal open reading frame. During trans-translation Ala-aminoacylated tmRNA acts like a tRNA, entering the A-site of stalled ribosomes, displacing the stalled mRNA. The ribosome then switches to translate the ORF on the tmRNA; the nascent peptide is terminated with the 'tag peptide' encoded by the tmRNA and targeted for degradation. The ribosome is freed to recommence translation, which seems to be the essential function of trans-translation. The polypeptide is SsrA-binding protein (Deinococcus radiodurans (strain ATCC 13939 / DSM 20539 / JCM 16871 / CCUG 27074 / LMG 4051 / NBRC 15346 / NCIMB 9279 / VKM B-1422 / R1)).